A 148-amino-acid polypeptide reads, in one-letter code: MASKRILKELKDLQKDPPTSCSAGPVAEDMFHWQATIMGPAESPYSGGVFLVTIHFPPDYPFKPPKVAFRTKVFHPNINSNGSICLDILKEQWSPALTISKVLLSICSLLTDPNPDDPLVPEIAHMYKTDRAKYEATARNWTQKYAMG.

The region spanning 1–147 (MASKRILKEL…ARNWTQKYAM (147 aa)) is the UBC core domain. Cys-85 serves as the catalytic Glycyl thioester intermediate.

This sequence belongs to the ubiquitin-conjugating enzyme family. As to quaternary structure, interacts with CIP8, CHIP, NLA and XERICO. As to expression, highest expression in young stems, old leaves. Lowest levels in floral buds, anthers and young leaves.

The enzyme catalyses S-ubiquitinyl-[E1 ubiquitin-activating enzyme]-L-cysteine + [E2 ubiquitin-conjugating enzyme]-L-cysteine = [E1 ubiquitin-activating enzyme]-L-cysteine + S-ubiquitinyl-[E2 ubiquitin-conjugating enzyme]-L-cysteine.. It functions in the pathway protein modification; protein ubiquitination. Functionally, accepts the ubiquitin from the E1 complex and catalyzes its covalent attachment to other proteins. Mediates the selective degradation of short-lived and abnormal proteins. In Arabidopsis thaliana (Mouse-ear cress), this protein is Ubiquitin-conjugating enzyme E2 8 (UBC8).